The following is an 84-amino-acid chain: Cell division topological specificity factor (84 aa).

It belongs to the MinE family.

Prevents the cell division inhibition by proteins MinC and MinD at internal division sites while permitting inhibition at polar sites. This ensures cell division at the proper site by restricting the formation of a division septum at the midpoint of the long axis of the cell. In Pseudomonas fluorescens (strain Pf0-1), this protein is Cell division topological specificity factor.